Reading from the N-terminus, the 338-residue chain is E3 ubiquitin-protein ligase RING1 (338 aa).

The disordered stretch occupies residues 102-124 (TTTSSSASIDPNNPSLSGPTRSG). Positions 110-121 (IDPNNPSLSGPT) are enriched in polar residues. The RING-type; atypical zinc finger occupies 224 to 265 (CAVCMDDFEEGTEAKQMPCKHLYHKDCLLPWLELHNSCPVCR). Basic and acidic residues-rich tracts occupy residues 267 to 279 (ELPT…ERRV) and 298 to 309 (SDGDNRTVERSF). The tract at residues 267-338 (ELPTDDPDYE…NAETRQEDLD (72 aa)) is disordered.

Post-translationally, auto-ubiquitinated as part of the enzymatic reaction. As to expression, mostly expressed in cotton fibers, and, to a lower extent, in leaves and flowers.

It carries out the reaction S-ubiquitinyl-[E2 ubiquitin-conjugating enzyme]-L-cysteine + [acceptor protein]-L-lysine = [E2 ubiquitin-conjugating enzyme]-L-cysteine + N(6)-ubiquitinyl-[acceptor protein]-L-lysine.. It participates in protein modification; protein ubiquitination. Functionally, E3 ubiquitin-protein ligase which accepts ubiquitin from an E2 ubiquitin-conjugating enzyme in the form of a thioester and then directly transfers the ubiquitin to targeted substrates. Promotes polyubiquitination of target proteins. The chain is E3 ubiquitin-protein ligase RING1 (RING1) from Gossypium hirsutum (Upland cotton).